The primary structure comprises 669 residues: Protein fem-1 homolog A (669 aa).

7 ANK repeats span residues 2–31, 40–70, 82–111, 115–145, 149–178, 182–211, and 214–243; these read DLRT…REEL, GGGT…SVEA, EGAP…SVNR, TNST…DLEV, HGHT…QVNR, KGNT…RMER, and YGMT…GQEQ. Ser108 carries the post-translational modification Phosphoserine. The tract at residues 240–278 is disordered; it reads GQEQVAGGEAQPGLPQEDPSTSQGCAQPQGAPCCSSSPE. 2 TPR repeats span residues 298–332 and 390–423; these read VEAL…RHQG and SYYI…QQSN. ANK repeat units follow at residues 534 to 576 and 580 to 609; these read NGFT…DPDS and DNNT…HMDA.

The protein belongs to the fem-1 family. Component of a CRL2 E3 ubiquitin-protein ligase complex, also named ECS (Elongin BC-CUL2/5-SOCS-box protein) complex, composed of CUL2, Elongin BC (ELOB and ELOC), RBX1 and substrate-specific adapter FEM1A. Interacts with PTGER4. Interacts with NFKB1; the interaction is direct. Post-translationally, phosphorylated; highly phosphorylated in myoblasts and myotubes. Phosphorylation at Ser-108 promotes PGE2-EP4-mediated inhibition of inflammation. Dephosphorylated by protein phosphatase 2A (PP2A). As to expression, present in macrophages derived from peripheral blood monocytes. Also present in atheromata (at protein level).

It localises to the mitochondrion. It is found in the cytoplasm. It functions in the pathway protein modification; protein ubiquitination. Functionally, substrate-recognition component of a Cul2-RING (CRL2) E3 ubiquitin-protein ligase complex of the DesCEND (destruction via C-end degrons) pathway, which recognizes a C-degron located at the extreme C terminus of target proteins, leading to their ubiquitination and degradation. The C-degron recognized by the DesCEND pathway is usually a motif of less than ten residues and can be present in full-length proteins, truncated proteins or proteolytically cleaved forms. The CRL2(FEM1A) complex specifically recognizes proteins with an arginine at the C-terminus: recognizes and binds proteins ending with -Lys/Arg-Xaa-Arg and -Lys/Arg-Xaa-Xaa-Arg C-degrons, such as SIL1 or OR51B2, leading to their ubiquitination and degradation. Promotes ubiquitination and degradation of SLBP. Involved in PGE2-EP4-mediated inhibition of inflammation of macrophages via interaction with NFKB1 and PTGER4. Promotes inflammation in brain microglia through MAP2K4/MKK4-mediated signaling. The polypeptide is Protein fem-1 homolog A (Homo sapiens (Human)).